The following is a 128-amino-acid chain: Small ribosomal subunit protein uS11 (128 aa).

This sequence belongs to the universal ribosomal protein uS11 family. As to quaternary structure, part of the 30S ribosomal subunit. Interacts with proteins S7 and S18. Binds to IF-3.

In terms of biological role, located on the platform of the 30S subunit, it bridges several disparate RNA helices of the 16S rRNA. Forms part of the Shine-Dalgarno cleft in the 70S ribosome. This is Small ribosomal subunit protein uS11 from Desulfosudis oleivorans (strain DSM 6200 / JCM 39069 / Hxd3) (Desulfococcus oleovorans).